The chain runs to 304 residues: UDP-3-O-acyl-N-acetylglucosamine deacetylase (304 aa).

Zn(2+) is bound by residues His78, His237, and Asp241. His264 serves as the catalytic Proton donor.

It belongs to the LpxC family. Zn(2+) serves as cofactor.

It catalyses the reaction a UDP-3-O-[(3R)-3-hydroxyacyl]-N-acetyl-alpha-D-glucosamine + H2O = a UDP-3-O-[(3R)-3-hydroxyacyl]-alpha-D-glucosamine + acetate. It functions in the pathway glycolipid biosynthesis; lipid IV(A) biosynthesis; lipid IV(A) from (3R)-3-hydroxytetradecanoyl-[acyl-carrier-protein] and UDP-N-acetyl-alpha-D-glucosamine: step 2/6. Catalyzes the hydrolysis of UDP-3-O-myristoyl-N-acetylglucosamine to form UDP-3-O-myristoylglucosamine and acetate, the committed step in lipid A biosynthesis. This is UDP-3-O-acyl-N-acetylglucosamine deacetylase from Legionella pneumophila (strain Paris).